We begin with the raw amino-acid sequence, 85 residues long: Large ribosomal subunit protein bL27 (85 aa).

The segment at 1 to 22 (MAHKKAGGSTRNGRDSESKRLG) is disordered.

The protein belongs to the bacterial ribosomal protein bL27 family.

The chain is Large ribosomal subunit protein bL27 from Aliivibrio salmonicida (strain LFI1238) (Vibrio salmonicida (strain LFI1238)).